A 504-amino-acid polypeptide reads, in one-letter code: UDP-glycosyltransferase UGT4 (504 aa).

Positions 1–23 (MTLLRDLLLLYINSLLFINPSIG) are cleaved as a signal peptide. The Lumenal segment spans residues 24-474 (ENILVFLPTK…SAVIDLYWFQ (451 aa)). N-linked (GlcNAc...) asparagine glycosylation is found at Asn54, Asn66, Asn69, and Asn422. The helical transmembrane segment at 475–495 (YILLDIILFYSLIVLILLCIL) threads the bilayer. The Cytoplasmic segment spans residues 496-504 (RIFFRMLTK).

Belongs to the UDP-glycosyltransferase family.

The protein localises to the microsome membrane. Functionally, catalyzes the transfer of a glycosyl group from a UDP-sugar to an acceptor molecule. The sequence is that of UDP-glycosyltransferase UGT4 from Dactylopius coccus (Cochineal).